The primary structure comprises 490 residues: Protein twist (490 aa).

Disordered regions lie at residues 48-74 (QLQHQQQHLHSHQHHQQHQQQQQQHTQ), 98-167 (PSNE…TGGS), and 330-359 (LDGSDAGGKAFRKPRRRLKRKPSKTEETDE). The segment covering 54–64 (QHLHSHQHHQQ) has biased composition (basic residues). 2 stretches are compositionally biased toward low complexity: residues 65–74 (HQQQQQQHTQ) and 104–135 (STSSNQSAQSTSLEMNNNNTSSNNTSSGNNPS). Residues 339-351 (AFRKPRRRLKRKP) show a composition bias toward basic residues. A bHLH domain is found at 362-413 (NQRVMANVRERQRTQSLNDAFKSLQQIIPTLPSDKLSKIQTLKLATRYIDFL).

In terms of assembly, efficient DNA binding requires dimerization with another bHLH protein. Homodimer.

It localises to the nucleus. Its function is as follows. Involved in the establishment and dorsoventral patterning of germ layers in the embryo. The sequence is that of Protein twist from Drosophila erecta (Fruit fly).